The primary structure comprises 238 residues: MAAALAVRGAVSAPAFGPEALTPDWENREVSTGTTIMAVQFDGGVVLGADSRTTTGSYIANRVTDKLTPIHDHIFCCRSGSAADTQAVADAVTYQLGFHSIELNEPPLVHTAASLFKEMCYRYREDLMAGIIIAGWDPQEGGQVYSVPMGGMMVRQSFAIGGSGSSYIYGYVDATYREGMTKDECLQFTANALALAMERDGSSGGVIRLAAIQQSGVERQVLLGDQIPKVTISTLPPP.

N-acetylalanine is present on A2. Positions 2-33 are cleaved as a propeptide — removed in mature form; it reads AAALAVRGAVSAPAFGPEALTPDWENREVSTG. T34 acts as the Nucleophile in catalysis. T68 bears the Phosphothreonine mark.

The protein belongs to the peptidase T1B family. As to quaternary structure, the 26S proteasome consists of a 20S proteasome core and two 19S regulatory subunits. The 20S proteasome core is a barrel-shaped complex made of 28 subunits that are arranged in four stacked rings. The two outer rings are each formed by seven alpha subunits, and the two inner rings are formed by seven beta subunits. The proteolytic activity is exerted by three beta-subunits PSMB5, PSMB6 and PSMB7.

It is found in the cytoplasm. The protein localises to the nucleus. It carries out the reaction Cleavage of peptide bonds with very broad specificity.. Its function is as follows. Component of the 20S core proteasome complex involved in the proteolytic degradation of most intracellular proteins. This complex plays numerous essential roles within the cell by associating with different regulatory particles. Associated with two 19S regulatory particles, forms the 26S proteasome and thus participates in the ATP-dependent degradation of ubiquitinated proteins. The 26S proteasome plays a key role in the maintenance of protein homeostasis by removing misfolded or damaged proteins that could impair cellular functions, and by removing proteins whose functions are no longer required. Associated with the PA200 or PA28, the 20S proteasome mediates ubiquitin-independent protein degradation. This type of proteolysis is required in several pathways including spermatogenesis (20S-PA200 complex) or generation of a subset of MHC class I-presented antigenic peptides (20S-PA28 complex). Within the 20S core complex, PSMB6 displays a peptidylglutamyl-hydrolyzing activity also termed postacidic or caspase-like activity, meaning that the peptides bond hydrolysis occurs directly after acidic residues. The polypeptide is Proteasome subunit beta type-6 (Psmb6) (Rattus norvegicus (Rat)).